The primary structure comprises 682 residues: Protein PilJ (682 aa).

The Cytoplasmic portion of the chain corresponds to 1-14; it reads MKKINAGNLFAGMR. A helical membrane pass occupies residues 15–38; it reads SSSVIAGLFIVLIVSIVLLFANFA. Over 39 to 306 the chain is Periplasmic; it reads YLNTQSNHDK…DGFENLAGGR (268 aa). A helical membrane pass occupies residues 307–333; the sequence is SINLFAGYALGALALASIILIGLVMVR. At 334-682 the chain is on the cytoplasmic side; it reads ETNRRLAETA…FKLPEGVEQA (349 aa). The HAMP domain occupies 347–398; sequence DRNQAAILRLLDEIADLADGDLTVAATVTEDFTGAIADSINYSIDQLRELVE. In terms of domain architecture, Methyl-accepting transducer spans 403–639; sequence TAVQVAAAAQ…HISNTMNVIQ (237 aa).

Belongs to the methyl-accepting chemotaxis (MCP) protein family.

The protein localises to the cell inner membrane. May be a part of a signal-transduction system that regulates twitching motility by controlling pilus function (extension and retraction). The chain is Protein PilJ (pilJ) from Pseudomonas aeruginosa (strain ATCC 15692 / DSM 22644 / CIP 104116 / JCM 14847 / LMG 12228 / 1C / PRS 101 / PAO1).